A 180-amino-acid chain; its full sequence is Crossover junction endodeoxyribonuclease RuvC (180 aa).

Active-site residues include Asp7, Glu66, and Asp138. 3 residues coordinate Mg(2+): Asp7, Glu66, and Asp138.

Belongs to the RuvC family. In terms of assembly, homodimer which binds Holliday junction (HJ) DNA. The HJ becomes 2-fold symmetrical on binding to RuvC with unstacked arms; it has a different conformation from HJ DNA in complex with RuvA. In the full resolvosome a probable DNA-RuvA(4)-RuvB(12)-RuvC(2) complex forms which resolves the HJ. Mg(2+) is required as a cofactor.

It localises to the cytoplasm. The catalysed reaction is Endonucleolytic cleavage at a junction such as a reciprocal single-stranded crossover between two homologous DNA duplexes (Holliday junction).. Functionally, the RuvA-RuvB-RuvC complex processes Holliday junction (HJ) DNA during genetic recombination and DNA repair. Endonuclease that resolves HJ intermediates. Cleaves cruciform DNA by making single-stranded nicks across the HJ at symmetrical positions within the homologous arms, yielding a 5'-phosphate and a 3'-hydroxyl group; requires a central core of homology in the junction. The consensus cleavage sequence is 5'-(A/T)TT(C/G)-3'. Cleavage occurs on the 3'-side of the TT dinucleotide at the point of strand exchange. HJ branch migration catalyzed by RuvA-RuvB allows RuvC to scan DNA until it finds its consensus sequence, where it cleaves and resolves the cruciform DNA. The protein is Crossover junction endodeoxyribonuclease RuvC of Burkholderia vietnamiensis (strain G4 / LMG 22486) (Burkholderia cepacia (strain R1808)).